A 155-amino-acid chain; its full sequence is 6,7-dimethyl-8-ribityllumazine synthase (155 aa).

5-amino-6-(D-ribitylamino)uracil contacts are provided by residues tyrosine 23, 57 to 59, and 81 to 83; these read AWE and CVI. (2S)-2-hydroxy-3-oxobutyl phosphate is bound at residue 86–87; that stretch reads ET. Histidine 89 acts as the Proton donor in catalysis. Phenylalanine 114 is a binding site for 5-amino-6-(D-ribitylamino)uracil. Residue arginine 128 participates in (2S)-2-hydroxy-3-oxobutyl phosphate binding.

This sequence belongs to the DMRL synthase family.

It catalyses the reaction (2S)-2-hydroxy-3-oxobutyl phosphate + 5-amino-6-(D-ribitylamino)uracil = 6,7-dimethyl-8-(1-D-ribityl)lumazine + phosphate + 2 H2O + H(+). It functions in the pathway cofactor biosynthesis; riboflavin biosynthesis; riboflavin from 2-hydroxy-3-oxobutyl phosphate and 5-amino-6-(D-ribitylamino)uracil: step 1/2. Its function is as follows. Catalyzes the formation of 6,7-dimethyl-8-ribityllumazine by condensation of 5-amino-6-(D-ribitylamino)uracil with 3,4-dihydroxy-2-butanone 4-phosphate. This is the penultimate step in the biosynthesis of riboflavin. In Rhodopirellula baltica (strain DSM 10527 / NCIMB 13988 / SH1), this protein is 6,7-dimethyl-8-ribityllumazine synthase.